The primary structure comprises 1021 residues: Nonribosomal peptide synthetase asaC (1021 aa).

Residues 17–418 form an adenylation (A) domain region; it reads RHHVRTSPNA…ARADNMVKIR (402 aa). The 76-residue stretch at 528–603 folds into the Carrier domain; the sequence is KDAGDSVTWL…GLASVIDAGH (76 aa). Residue serine 563 is modified to O-(pantetheine 4'-phosphoryl)serine. Positions 646–888 are short-chain dehydrogenase/reductase (R) domain; that stretch reads LTGATGFLGT…MIPVDFITTA (243 aa).

Belongs to the NRP synthetase family.

It participates in secondary metabolite biosynthesis. Nonribosomal peptide synthetase; part of the gene cluster that mediates the biosynthesis of aspergillic acid, a hydroxamic acid-containing pyrazinone with aliphatic side chains that originates from leucine (Leu) and isoleucine (Ile). Aspergillic acid has antibiotic properties and was shown to be lethal to mice. The first step in the pathway is the production of deoxyaspergillic acid via a condensation between the Ile amine and the Leu carboxylic acid, followed by a reductive release from the protein forming the dipeptide aldehyde NH(2)-Leu-Ile-CHO, which could undergo an intermolecular cyclization resulting in a dihydropyrazinone. As the NRPS asaC lacks a condensation domain, it is improbable that it is responsible for condensation of Leu and Ile. One possibility is that asaC acts on a previously condensed dipeptide and functions as a Leu-Ile reductase to yield deoxyaspergillic acid. After asaC forms deoxyaspergillic acid, the cytochrome P450 asaD oxidizes the pyrazinone to the hydroxamic acid-containing bioactive metabolite aspergillic acid. The hydroxylase/desaturase asaB can then convert aspergillic acid to hydroxyaspergillic acid. Both aspergillic acid and hydroxyaspergillic acid can form complexes with iron producing ferriaspergillin analogs. The polypeptide is Nonribosomal peptide synthetase asaC (Aspergillus flavus (strain ATCC 200026 / FGSC A1120 / IAM 13836 / NRRL 3357 / JCM 12722 / SRRC 167)).